The following is a 154-amino-acid chain: UPF0039 protein sll0451 (154 aa).

The 144-residue stretch at Q8–P151 folds into the N-acetyltransferase domain.

The protein belongs to the UPF0039 (ElaA) family.

The chain is UPF0039 protein sll0451 from Synechocystis sp. (strain ATCC 27184 / PCC 6803 / Kazusa).